The sequence spans 162 residues: 2-amino-4-hydroxy-6-hydroxymethyldihydropteridine pyrophosphokinase (162 aa).

It belongs to the HPPK family.

The enzyme catalyses 6-hydroxymethyl-7,8-dihydropterin + ATP = (7,8-dihydropterin-6-yl)methyl diphosphate + AMP + H(+). Its pathway is cofactor biosynthesis; tetrahydrofolate biosynthesis; 2-amino-4-hydroxy-6-hydroxymethyl-7,8-dihydropteridine diphosphate from 7,8-dihydroneopterin triphosphate: step 4/4. Catalyzes the transfer of pyrophosphate from adenosine triphosphate (ATP) to 6-hydroxymethyl-7,8-dihydropterin, an enzymatic step in folate biosynthesis pathway. This is 2-amino-4-hydroxy-6-hydroxymethyldihydropteridine pyrophosphokinase (folK) from Pseudomonas aeruginosa (strain ATCC 15692 / DSM 22644 / CIP 104116 / JCM 14847 / LMG 12228 / 1C / PRS 101 / PAO1).